A 738-amino-acid chain; its full sequence is 1,4-alpha-glucan branching enzyme GlgB (738 aa).

Asp-417 acts as the Nucleophile in catalysis. Glu-472 acts as the Proton donor in catalysis.

Belongs to the glycosyl hydrolase 13 family. GlgB subfamily. As to quaternary structure, monomer.

The enzyme catalyses Transfers a segment of a (1-&gt;4)-alpha-D-glucan chain to a primary hydroxy group in a similar glucan chain.. Its pathway is glycan biosynthesis; glycogen biosynthesis. Functionally, catalyzes the formation of the alpha-1,6-glucosidic linkages in glycogen by scission of a 1,4-alpha-linked oligosaccharide from growing alpha-1,4-glucan chains and the subsequent attachment of the oligosaccharide to the alpha-1,6 position. This is 1,4-alpha-glucan branching enzyme GlgB from Burkholderia pseudomallei (strain 668).